The following is a 66-amino-acid chain: Putative inactive (E)-beta-ocimene synthase, chloroplastic (66 aa).

Residues 1-25 constitute a chloroplast transit peptide; that stretch reads MAAHNLCFNSAFVCNVHHQKTQHFP.

Belongs to the terpene synthase family. Tpsb subfamily. Expressed exclusively in flowers.

The protein resides in the plastid. Its subcellular location is the chloroplast. The sequence is that of Putative inactive (E)-beta-ocimene synthase, chloroplastic (TPS02) from Arabidopsis thaliana (Mouse-ear cress).